A 92-amino-acid chain; its full sequence is Long neurotoxin 3FTx-Oxy1 (92 aa).

The first 21 residues, 1-21 (MKTLLLTLVVVTIVCLDLGYT), serve as a signal peptide directing secretion. 5 disulfides stabilise this stretch: Cys24–Cys42, Cys35–Cys63, Cys48–Cys52, Cys67–Cys79, and Cys80–Cys85.

It belongs to the three-finger toxin family. Long-chain subfamily. Type II alpha-neurotoxin sub-subfamily. Expressed by the venom gland.

The protein localises to the secreted. Its function is as follows. Binds with high affinity to muscular (alpha-1/CHRNA1) and neuronal (alpha-7/CHRNA7) nicotinic acetylcholine receptor (nAChR) and inhibits acetylcholine from binding to the receptor, thereby impairing neuromuscular and neuronal transmission. This chain is Long neurotoxin 3FTx-Oxy1, found in Oxyuranus microlepidotus (Inland taipan).